The sequence spans 561 residues: Sensor histidine kinase BtsS (561 aa).

The Cytoplasmic segment spans residues 1 to 3 (MYD). A helical membrane pass occupies residues 4-24 (FNLVLLLLQQMCVFLVIAWLM). Over 25–43 (SKTPLFIPLMQVTVRLPHK) the chain is Periplasmic. Residues 44–64 (FLCYIVFSIFCIMGTWFGLHI) traverse the membrane as a helical segment. Over 65 to 72 (DDSIANTR) the chain is Cytoplasmic. A helical membrane pass occupies residues 73–93 (AIGAVMGGLLGGPVVGGLVGL). The Periplasmic segment spans residues 94-108 (TGGLHRYSMGGMTAL). A helical membrane pass occupies residues 109 to 129 (SCMISTIVEGLLGGLVHSILI). At 130-140 (RRGRTDKVFNP) the chain is on the cytoplasmic side. The helical transmembrane segment at 141–161 (ITAGAVTFVAEMVQMLIILAI) threads the bilayer. Over 162–170 (ARPYEDAVR) the chain is Periplasmic. The helical transmembrane segment at 171 to 191 (LVSNIAAPMMVTNTVGAALFM) threads the bilayer. Over 192 to 561 (RILLDKRAMF…TLRLPWRDEA (370 aa)) the chain is Cytoplasmic. A Histidine kinase domain is found at 354-559 (QILAGQYERQ…RITLRLPWRD (206 aa)).

In terms of processing, autophosphorylated.

It is found in the cell inner membrane. It catalyses the reaction ATP + protein L-histidine = ADP + protein N-phospho-L-histidine.. Its function is as follows. Member of the two-component regulatory system BtsS/BtsR. BtsS is a high-affinity receptor for extracellular pyruvate that activates BtsR by phosphorylation. In Escherichia coli O6:H1 (strain CFT073 / ATCC 700928 / UPEC), this protein is Sensor histidine kinase BtsS.